We begin with the raw amino-acid sequence, 270 residues long: Nodule lectin (270 aa).

The N-terminal stretch at 1 to 33 is a signal peptide; sequence MAFYRTNLPTRELFSLVSVVIVLLATNINSVQA. The propeptide occupies 34–41; it reads LSFNFTKL. An N-linked (GlcNAc...) asparagine glycan is attached at Asn-134.

Belongs to the leguminous lectin family. In terms of processing, glycosylated in a boron-dependent manner. Glycosylation is required for localization to symbiosomes. 3 different glycosylation variants, NLEC-1A, NLEC-1B and NLEC-1C, have been identified. As to expression, expressed in nodules of Rhizobium-infected and uninfected roots and in the root stele near the nodule attachment point. In roots which have been colonized by the endomycorrhizal fungus G.versiforme, detected only in cortical cells colonized by the fungus, mainly those containing arbuscules.

It localises to the symbiosome. The protein localises to the peribacteroid space. The protein resides in the peribacteroid membrane. Functionally, involved in symbiosome development. In Pisum sativum (Garden pea), this protein is Nodule lectin (NLEC1).